The following is a 161-amino-acid chain: Cell cycle link protein (161 aa).

A binding to host SKP1 protein region spans residues 9 to 21; that stretch reads MPDDVKREIKEIY. An LXCXE motif, interaction with host RBR motif is present at residues 111 to 115; it reads LYCDE.

As to quaternary structure, interacts with host SKP1. Interacts (via LXCXE domain) with host retinoblastoma-related protein 2 (RBR2). Interacts (via LXCXE domain) with human RB1. Interacts (via LXCXE domain) with retinoblastoma-related proteins (RBR).

Its function is as follows. Interacts with and disrupts the function of host retinoblastoma-related proteins RBR, which are key regulators of the cell cycle. Induces transcriptional activation of E2F-regulated S-phase and G2/M-phase-specific genes. Inactivation of the ability of RBR to arrest the cell cycle leads to the stimulation of viral DNA replication. Acts as a suppressor of RNA-mediated gene silencing, also known as post-transcriptional gene silencing (PTGS), a mechanism of plant viral defense that limits the accumulation of viral RNAs. This chain is Cell cycle link protein (DNA-C), found in Musa (BBTV).